Reading from the N-terminus, the 117-residue chain is G antigen 12I (117 aa).

The tract at residues 1–117 (MSWRGRSTYY…PEEGEKQSQC (117 aa)) is disordered. Acidic residues-rich tracts occupy residues 32–45 (FSDE…EEGE) and 87–96 (ECEDGPDGQE). A compositionally biased stretch (basic and acidic residues) spans 103-117 (EEVKTPEEGEKQSQC).

It belongs to the GAGE family. In terms of assembly, forms tetramers.

The chain is G antigen 12I (GAGE12I) from Homo sapiens (Human).